The primary structure comprises 316 residues: PAK4-inhibitor inka1 (316 aa).

The interval 108–130 (YSEVSGSSLRGEEDDIVEEESET) is disordered. Acidic residues predominate over residues 119–128 (EEDDIVEEES). Inka box stretches follow at residues 182-219 (DSQD…DLPE) and 289-316 (SDIA…AGFL).

Belongs to the INKA family. In terms of assembly, interacts with pak4/pak5.

Its subcellular location is the nucleus. The protein localises to the cytoplasm. Functionally, inhibitor of the serine/threonine-protein kinase pak4/pak5. Acts by binding pak4/pak5 in a substrate-like manner, inhibiting the protein kinase activity. Required for the proper migration of neural crest cells during embryonic development, probably by inhibiting pak4/pak5. This chain is PAK4-inhibitor inka1, found in Xenopus laevis (African clawed frog).